We begin with the raw amino-acid sequence, 447 residues long: Argininosuccinate synthase (447 aa).

ATP is bound by residues 20 to 28 (AFSGGLDTS) and A46. Y102 contributes to the L-citrulline binding site. Residues G132 and T134 each contribute to the ATP site. 3 residues coordinate L-aspartate: T134, N138, and D139. N138 contacts L-citrulline. Residue D139 participates in ATP binding. The L-citrulline site is built by R142 and S195. D197 provides a ligand contact to ATP. Residues T204, E206, and E283 each contribute to the L-citrulline site.

Belongs to the argininosuccinate synthase family. Type 2 subfamily. As to quaternary structure, homotetramer.

It is found in the cytoplasm. The enzyme catalyses L-citrulline + L-aspartate + ATP = 2-(N(omega)-L-arginino)succinate + AMP + diphosphate + H(+). It participates in amino-acid biosynthesis; L-arginine biosynthesis; L-arginine from L-ornithine and carbamoyl phosphate: step 2/3. This chain is Argininosuccinate synthase, found in Neisseria meningitidis serogroup C / serotype 2a (strain ATCC 700532 / DSM 15464 / FAM18).